The sequence spans 652 residues: Transmembrane 9 superfamily member 12 (652 aa).

The first 20 residues, 1 to 20, serve as a signal peptide directing secretion; the sequence is MFGVYRVFVLLVFVSQLCNG. Over 21-286 the chain is Lumenal; sequence FYLPGSYMHT…LKMEGARVHW (266 aa). The helical transmembrane segment at 287–307 threads the bilayer; the sequence is FSILNSLMVIFFLAGIVFVIF. The Cytoplasmic segment spans residues 308 to 362; the sequence is LRTVRRDLTKYEELDKEAQAQMNEELSGWKLVVGDVFREPEMSKLLCIMVGDGVR. Residues 363 to 383 traverse the membrane as a helical segment; it reads ITGMAVVTIVFAALGFMSPAS. At 384-386 the chain is on the lumenal side; it reads RGM. The chain crosses the membrane as a helical span at residues 387–407; the sequence is LLTGMIILYLFLGIVAGYAGV. The Cytoplasmic portion of the chain corresponds to 408-426; it reads RLWRTVKGTSEGWRSLSWS. A helical membrane pass occupies residues 427 to 447; the sequence is IACFFPGIAFVILTVLNFLLW. Residues 448-460 are Lumenal-facing; sequence SSNSTGAIPISLY. The helical transmembrane segment at 461–481 threads the bilayer; that stretch reads FELLALWFCISVPLTLFGGFL. At 482–510 the chain is on the cytoplasmic side; sequence GTRAEAIQFPVRTNQIPREIPERKYPSWL. A helical membrane pass occupies residues 511-531; the sequence is LVLGAGTLPFGTLFIELFFIF. Residues 532–541 are Lumenal-facing; it reads SSIWLGRFYY. Residues 542 to 562 form a helical membrane-spanning segment; the sequence is VFGFLLIVLLLLVVVCAEVSV. Over 563–580 the chain is Cytoplasmic; it reads VLTYMHLCVEDWRWWWKA. The chain crosses the membrane as a helical span at residues 581–601; it reads FYASGSVALYVFAYSINYLVF. At 602–613 the chain is on the lumenal side; sequence DLQSLSGPVSAM. The chain crosses the membrane as a helical span at residues 614–634; it reads LYIGYSLLMAIAIMLATGTIG. At 635 to 652 the chain is on the cytoplasmic side; the sequence is FLTSFYFVHYLFSSVKID. The short motif at 641–646 is the Endoplasmic reticulum export signal element; the sequence is FVHYLF. Residues 650-652 carry the Golgi retention signal motif; sequence KID.

This sequence belongs to the nonaspanin (TM9SF) (TC 9.A.2) family.

The protein localises to the endosome membrane. Its subcellular location is the golgi apparatus membrane. The chain is Transmembrane 9 superfamily member 12 from Arabidopsis thaliana (Mouse-ear cress).